We begin with the raw amino-acid sequence, 385 residues long: 8-amino-7-oxononanoate synthase (385 aa).

Arg21 lines the substrate pocket. A pyridoxal 5'-phosphate-binding site is contributed by 108–109 (GF). Residue His133 participates in substrate binding. Pyridoxal 5'-phosphate contacts are provided by Ser179, His207, and Thr233. Lys236 carries the N6-(pyridoxal phosphate)lysine modification. Thr352 is a binding site for substrate.

Belongs to the class-II pyridoxal-phosphate-dependent aminotransferase family. BioF subfamily. Homodimer. Requires pyridoxal 5'-phosphate as cofactor.

The catalysed reaction is 6-carboxyhexanoyl-[ACP] + L-alanine + H(+) = (8S)-8-amino-7-oxononanoate + holo-[ACP] + CO2. It participates in cofactor biosynthesis; biotin biosynthesis. Functionally, catalyzes the decarboxylative condensation of pimeloyl-[acyl-carrier protein] and L-alanine to produce 8-amino-7-oxononanoate (AON), [acyl-carrier protein], and carbon dioxide. The polypeptide is 8-amino-7-oxononanoate synthase (Salmonella agona (strain SL483)).